A 306-amino-acid chain; its full sequence is Tryptophan 2,3-dioxygenase (306 aa).

Substrate is bound by residues 75–79, tyrosine 137, and arginine 141; that span reads FIIQH. Histidine 264 lines the heme pocket. Threonine 278 is a binding site for substrate.

The protein belongs to the tryptophan 2,3-dioxygenase family. Homotetramer. Heme is required as a cofactor.

The enzyme catalyses L-tryptophan + O2 = N-formyl-L-kynurenine. It participates in amino-acid degradation; L-tryptophan degradation via kynurenine pathway; L-kynurenine from L-tryptophan: step 1/2. Functionally, heme-dependent dioxygenase that catalyzes the oxidative cleavage of the L-tryptophan (L-Trp) pyrrole ring and converts L-tryptophan to N-formyl-L-kynurenine. Catalyzes the oxidative cleavage of the indole moiety. This Paraburkholderia phytofirmans (strain DSM 17436 / LMG 22146 / PsJN) (Burkholderia phytofirmans) protein is Tryptophan 2,3-dioxygenase.